The following is a 226-amino-acid chain: Histidine biosynthesis bifunctional protein HisIE (226 aa).

The segment at 1–131 (MMPMNQEFIQ…STFNRPLSNT (131 aa)) is phosphoribosyl-AMP cyclohydrolase. The phosphoribosyl-ATP pyrophosphohydrolase stretch occupies residues 132-226 (CSELFEVIKD…KRRQSKSNPK (95 aa)).

The protein in the N-terminal section; belongs to the PRA-CH family. In the C-terminal section; belongs to the PRA-PH family.

It is found in the cytoplasm. The enzyme catalyses 1-(5-phospho-beta-D-ribosyl)-ATP + H2O = 1-(5-phospho-beta-D-ribosyl)-5'-AMP + diphosphate + H(+). The catalysed reaction is 1-(5-phospho-beta-D-ribosyl)-5'-AMP + H2O = 1-(5-phospho-beta-D-ribosyl)-5-[(5-phospho-beta-D-ribosylamino)methylideneamino]imidazole-4-carboxamide. It participates in amino-acid biosynthesis; L-histidine biosynthesis; L-histidine from 5-phospho-alpha-D-ribose 1-diphosphate: step 2/9. Its pathway is amino-acid biosynthesis; L-histidine biosynthesis; L-histidine from 5-phospho-alpha-D-ribose 1-diphosphate: step 3/9. The protein is Histidine biosynthesis bifunctional protein HisIE of Prochlorococcus marinus (strain SARG / CCMP1375 / SS120).